Consider the following 139-residue polypeptide: Small ribosomal subunit protein uS12 (139 aa).

D102 carries the post-translational modification 3-methylthioaspartic acid.

This sequence belongs to the universal ribosomal protein uS12 family. In terms of assembly, part of the 30S ribosomal subunit. Contacts proteins S8 and S17. May interact with IF1 in the 30S initiation complex.

In terms of biological role, with S4 and S5 plays an important role in translational accuracy. Its function is as follows. Interacts with and stabilizes bases of the 16S rRNA that are involved in tRNA selection in the A site and with the mRNA backbone. Located at the interface of the 30S and 50S subunits, it traverses the body of the 30S subunit contacting proteins on the other side and probably holding the rRNA structure together. The combined cluster of proteins S8, S12 and S17 appears to hold together the shoulder and platform of the 30S subunit. This Phytoplasma australiense protein is Small ribosomal subunit protein uS12.